A 163-amino-acid polypeptide reads, in one-letter code: Small ribosomal subunit protein uS5 (163 aa).

Positions 8–71 (LVEKIVYLNR…ERAKKDMVQI (64 aa)) constitute an S5 DRBM domain.

Belongs to the universal ribosomal protein uS5 family. In terms of assembly, part of the 30S ribosomal subunit. Contacts proteins S4 and S8.

In terms of biological role, with S4 and S12 plays an important role in translational accuracy. Located at the back of the 30S subunit body where it stabilizes the conformation of the head with respect to the body. In Nitratidesulfovibrio vulgaris (strain DSM 19637 / Miyazaki F) (Desulfovibrio vulgaris), this protein is Small ribosomal subunit protein uS5.